The chain runs to 206 residues: Ribosomal RNA small subunit methyltransferase G (206 aa).

Residues Gly74, Leu79, 125–126 (VE), and Arg140 contribute to the S-adenosyl-L-methionine site.

This sequence belongs to the methyltransferase superfamily. RNA methyltransferase RsmG family.

The protein localises to the cytoplasm. The enzyme catalyses guanosine(527) in 16S rRNA + S-adenosyl-L-methionine = N(7)-methylguanosine(527) in 16S rRNA + S-adenosyl-L-homocysteine. Specifically methylates the N7 position of guanine in position 527 of 16S rRNA. This Shewanella sp. (strain MR-7) protein is Ribosomal RNA small subunit methyltransferase G.